The following is a 467-amino-acid chain: Chromosomal replication initiator protein DnaA (467 aa).

The tract at residues 1 to 80 (MTSELWHQCL…APRISLKIGS (80 aa)) is domain I, interacts with DnaA modulators. The tract at residues 80-130 (SITGNSKGQQASKDSAVGATRTTAPSRPVIADVAPSGERNVTVEGAIKHES) is domain II. The segment at 131–347 (YLNPTFTFET…GALKLVIANA (217 aa)) is domain III, AAA+ region. Residues G175, G177, K178, and T179 each coordinate ATP. A domain IV, binds dsDNA region spans residues 348 to 467 (HFTGQEITPA…YQNFMRMLTS (120 aa)).

The protein belongs to the DnaA family. Oligomerizes as a right-handed, spiral filament on DNA at oriC.

The protein localises to the cytoplasm. Its function is as follows. Plays an essential role in the initiation and regulation of chromosomal replication. ATP-DnaA binds to the origin of replication (oriC) to initiate formation of the DNA replication initiation complex once per cell cycle. Binds the DnaA box (a 9 base pair repeat at the origin) and separates the double-stranded (ds)DNA. Forms a right-handed helical filament on oriC DNA; dsDNA binds to the exterior of the filament while single-stranded (ss)DNA is stabiized in the filament's interior. The ATP-DnaA-oriC complex binds and stabilizes one strand of the AT-rich DNA unwinding element (DUE), permitting loading of DNA polymerase. After initiation quickly degrades to an ADP-DnaA complex that is not apt for DNA replication. Binds acidic phospholipids. This chain is Chromosomal replication initiator protein DnaA, found in Hahella chejuensis (strain KCTC 2396).